We begin with the raw amino-acid sequence, 368 residues long: Glycolate oxidase 2 (368 aa).

Positions 1-360 constitute an FMN hydroxy acid dehydrogenase domain; that stretch reads MALVTNVCEY…TRGHVVTESD (360 aa). Residues 78 to 80, serine 107, 128 to 130, and threonine 156 contribute to the FMN site; these read PTA and QLS. Arginine 165 lines the glyoxylate pocket. Lysine 231 and serine 253 together coordinate FMN. Histidine 255 and arginine 258 together coordinate glyoxylate. Histidine 255 serves as the catalytic Proton acceptor. FMN-binding positions include 286–290 and 309–310; these read DSGFR and GR. Positions 366 to 368 match the Microbody targeting signal motif; sequence SRL.

Belongs to the FMN-dependent alpha-hydroxy acid dehydrogenase family. Homotetramer. The cofactor is FMN.

The protein resides in the peroxisome. The enzyme catalyses glycolate + O2 = glyoxylate + H2O2. Its pathway is photosynthesis; photorespiration; glycine from 2-phosphoglycolate: step 2/3. Catalyzes the oxidation of glycolate to glyoxylate, with a reduction of O2 to H2O2. Is a key enzyme in photorespiration in green plants. This Oryza sativa subsp. indica (Rice) protein is Glycolate oxidase 2 (GLO2).